Here is a 321-residue protein sequence, read N- to C-terminus: Olfactory receptor 5K3 (321 aa).

Topologically, residues 1–25 (MNKENHSLIAEFILTGFTYHPKLKT) are extracellular. A glycan (N-linked (GlcNAc...) asparagine) is linked at Asn5. A helical membrane pass occupies residues 26-46 (VLFVVFFAIYLITMVGNIGLV). Topologically, residues 47–56 (ALIYIEQRLH) are cytoplasmic. The chain crosses the membrane as a helical span at residues 57–77 (TPMYIFLGNLVLMDSCCSSAI). Residues 78–97 (TPKMLENFFSEDKRITLYEC) are Extracellular-facing. The cysteines at positions 97 and 179 are disulfide-linked. Residues 98–118 (MAQFYFLCLAETTDCFLLAAM) form a helical membrane-spanning segment. At 119–143 (AYDCYVAICNPLQYHTMMSKTLCIQ) the chain is on the cytoplasmic side. The helical transmembrane segment at 144–164 (MTAGAYLAGNLHPMIEVEFLL) threads the bilayer. The Extracellular segment spans residues 165–196 (RLTFCGSHQINHFFCDVLPLYRLSCINPYINE). The helical transmembrane segment at 197-217 (LVLFILAGSIQIFTIVLVSYF) threads the bilayer. Residues 218-235 (YILFTIFTMKSKEGRGKA) lie on the Cytoplasmic side of the membrane. Residues 236-256 (LSTCASHFLSVSIFCDSLLFM) traverse the membrane as a helical segment. The Extracellular segment spans residues 257 to 269 (YARPGAVNEGDKD). Residues 270-290 (IPVAIFYTLVIPLLNPFIYSL) traverse the membrane as a helical segment. Residues 291-321 (RNKEVINIMKKIMKKRKFCHILKQMSSPLAT) are Cytoplasmic-facing.

The protein belongs to the G-protein coupled receptor 1 family.

It is found in the cell membrane. Odorant receptor. The chain is Olfactory receptor 5K3 (OR5K3) from Homo sapiens (Human).